Here is a 479-residue protein sequence, read N- to C-terminus: Proline--tRNA ligase (479 aa).

This sequence belongs to the class-II aminoacyl-tRNA synthetase family. ProS type 3 subfamily. In terms of assembly, homodimer.

The protein resides in the cytoplasm. It carries out the reaction tRNA(Pro) + L-proline + ATP = L-prolyl-tRNA(Pro) + AMP + diphosphate. In terms of biological role, catalyzes the attachment of proline to tRNA(Pro) in a two-step reaction: proline is first activated by ATP to form Pro-AMP and then transferred to the acceptor end of tRNA(Pro). This is Proline--tRNA ligase from Lachnospira eligens (strain ATCC 27750 / DSM 3376 / VPI C15-48 / C15-B4) (Eubacterium eligens).